A 284-amino-acid chain; its full sequence is CUE domain-containing protein 2 (284 aa).

Residues 141–184 (EELPGVDVLLEVFPTCSMEQAQWVLAKARGDLEEAVHMLVEGKE) form the CUE domain. The segment at 183 to 204 (KEEGPPGWDGPSQDLPRRLRGP) is disordered.

The protein belongs to the CUEDC2 family. In terms of assembly, interacts with PGR and ESR1.

Its subcellular location is the cytoplasm. The protein localises to the nucleus. Functionally, controls PGR and ESR1 protein levels through their targeting for ubiquitination and subsequent proteasomal degradation. This chain is CUE domain-containing protein 2 (Cuedc2), found in Mus musculus (Mouse).